Reading from the N-terminus, the 870-residue chain is Valine--tRNA ligase (870 aa).

The short motif at 42–52 (PNVTGVLHIGH) is the 'HIGH' region element. A 'KMSKS' region motif is present at residues 527 to 531 (KMSKS). ATP is bound at residue Lys-530. A coiled-coil region spans residues 800–870 (LENVDLSGIL…ISVELQNLRG (71 aa)).

It belongs to the class-I aminoacyl-tRNA synthetase family. ValS type 1 subfamily. As to quaternary structure, monomer.

Its subcellular location is the cytoplasm. It catalyses the reaction tRNA(Val) + L-valine + ATP = L-valyl-tRNA(Val) + AMP + diphosphate. Functionally, catalyzes the attachment of valine to tRNA(Val). As ValRS can inadvertently accommodate and process structurally similar amino acids such as threonine, to avoid such errors, it has a 'posttransfer' editing activity that hydrolyzes mischarged Thr-tRNA(Val) in a tRNA-dependent manner. This Campylobacter jejuni (strain RM1221) protein is Valine--tRNA ligase.